Reading from the N-terminus, the 86-residue chain is Small ribosomal subunit protein bS20 (86 aa).

Positions 1 to 27 (MANSKQAKKRAGQSEKRRQHNASRRSM) are disordered.

The protein belongs to the bacterial ribosomal protein bS20 family.

Functionally, binds directly to 16S ribosomal RNA. The chain is Small ribosomal subunit protein bS20 from Colwellia psychrerythraea (strain 34H / ATCC BAA-681) (Vibrio psychroerythus).